The sequence spans 202 residues: Orotate phosphoribosyltransferase (202 aa).

5-phospho-alpha-D-ribose 1-diphosphate is bound by residues arginine 94, lysine 98, histidine 100, and 120–128 (EDLISTGGS). Serine 124 contributes to the orotate binding site.

The protein belongs to the purine/pyrimidine phosphoribosyltransferase family. PyrE subfamily. In terms of assembly, homodimer. Mg(2+) is required as a cofactor.

It catalyses the reaction orotidine 5'-phosphate + diphosphate = orotate + 5-phospho-alpha-D-ribose 1-diphosphate. Its pathway is pyrimidine metabolism; UMP biosynthesis via de novo pathway; UMP from orotate: step 1/2. Its function is as follows. Catalyzes the transfer of a ribosyl phosphate group from 5-phosphoribose 1-diphosphate to orotate, leading to the formation of orotidine monophosphate (OMP). The protein is Orotate phosphoribosyltransferase of Staphylococcus haemolyticus (strain JCSC1435).